Here is a 364-residue protein sequence, read N- to C-terminus: Ribosomal RNA small subunit methyltransferase H (364 aa).

Residues 55–57 (GGH), Asp75, Phe101, Asp122, and Gln129 each bind S-adenosyl-L-methionine. Residues 333–364 (LPPGGGAGFVKAGRVPGEPVRGTRAGSKGRRR) are disordered.

Belongs to the methyltransferase superfamily. RsmH family.

Its subcellular location is the cytoplasm. It catalyses the reaction cytidine(1402) in 16S rRNA + S-adenosyl-L-methionine = N(4)-methylcytidine(1402) in 16S rRNA + S-adenosyl-L-homocysteine + H(+). In terms of biological role, specifically methylates the N4 position of cytidine in position 1402 (C1402) of 16S rRNA. This Bordetella bronchiseptica (strain ATCC BAA-588 / NCTC 13252 / RB50) (Alcaligenes bronchisepticus) protein is Ribosomal RNA small subunit methyltransferase H.